We begin with the raw amino-acid sequence, 328 residues long: Mitotic checkpoint protein BUB3 (328 aa).

WD repeat units lie at residues 4–44, 47–84, 87–125, 129–164, and 170–210; these read SNEF…LYDV, NSMR…MHDL, DQEN…LWDP, CNAG…VWDL, and VQQR…YLDP. Lys-179 is subject to N6-acetyllysine. Ser-211 bears the Phosphoserine mark. A Glycyl lysine isopeptide (Lys-Gly) (interchain with G-Cter in ubiquitin) cross-link involves residue Lys-216. 2 WD repeats span residues 217–263 and 267–316; these read KKYA…IWDP and KRLC…IRQV.

This sequence belongs to the WD repeat BUB3 family. As to quaternary structure, interacts with BUB1 and BUBR1. The BUB1/BUB3 complex interacts with MAD1L1. Interacts with ZNF207/BuGZ; leading to promote stability and kinetochore loading of BUB3. Post-translationally, poly-ADP-ribosylated by PARP1. Ubiquitinated by UBR5, promoting disassembly of the mitotic checkpoint complex from the APC/C complex.

Its subcellular location is the nucleus. The protein resides in the chromosome. It is found in the centromere. It localises to the kinetochore. In terms of biological role, has a dual function in spindle-assembly checkpoint signaling and in promoting the establishment of correct kinetochore-microtubule (K-MT) attachments. Promotes the formation of stable end-on bipolar attachments. Necessary for kinetochore localization of BUB1. Regulates chromosome segregation during oocyte meiosis. The BUB1/BUB3 complex plays a role in the inhibition of anaphase-promoting complex or cyclosome (APC/C) when spindle-assembly checkpoint is activated and inhibits the ubiquitin ligase activity of APC/C by phosphorylating its activator CDC20. This complex can also phosphorylate MAD1L1. This is Mitotic checkpoint protein BUB3 (BUB3) from Homo sapiens (Human).